We begin with the raw amino-acid sequence, 188 residues long: Large ribosomal subunit protein eL18 (188 aa).

A disordered region spans residues 147–188; sequence EANKHFGPAPGVPHSHTKAHVRSKGRQFERARGRRTSKGYKK. Basic residues-rich tracts occupy residues 161 to 171 and 178 to 188; these read SHTKAHVRSKG and RGRRTSKGYKK.

It belongs to the eukaryotic ribosomal protein eL18 family.

It is found in the cytoplasm. The chain is Large ribosomal subunit protein eL18 (RpL18) from Diaphorina citri (Asian citrus psyllid).